The following is a 212-amino-acid chain: Cyclin-dependent kinase 2-interacting protein (212 aa).

Methionine 1 is subject to N-acetylmethionine. Phosphoserine is present on residues serine 69 and serine 73. A coiled-coil region spans residues 73-107; sequence SKENEEKVCLEYNEELEKLCEELQATLDGLTKIQV. Serine 202 is a binding site for Na(+).

It belongs to the CINP family. In terms of assembly, homodimer. Part of the 55LCC heterohexameric ATPase complex composed at least of AIRIM, AFG2A, AFG2B and CINP. Interacts with AIRIM. Interacts with CDK2 and CDC7. Interacts with the components of the replication complex, MCM2, MCM3, MCM4, MCM5, MCM6, MCM7 and with ORC2-containing complexes. Interacts with ATRIP. Interacts with CEP152. Associates with pre-60S ribosomal particles. Phosphorylated by CDC7 but not by CDK2.

The protein localises to the nucleus. Its function is as follows. Component of the DNA replication complex, which interacts with two kinases, CDK2 and CDC7, thereby providing a functional and physical link between CDK2 and CDC7 during firing of the origins of replication. Regulates ATR-mediated checkpoint signaling in response to DNA damage. Part of the 55LCC heterohexameric ATPase complex which is chromatin-associated and promotes replisome proteostasis to maintain replication fork progression and genome stability. Required for replication fork progression, sister chromatid cohesion, and chromosome stability. The ATPase activity is specifically enhanced by replication fork DNA and is coupled to cysteine protease-dependent cleavage of replisome substrates in response to replication fork damage. Uses ATPase activity to process replisome substrates in S-phase, facilitating their proteolytic turnover from chromatin to ensure DNA replication and mitotic fidelity. As part of 55LCC complex, also involved in the cytoplasmic maturation steps of pre-60S ribosomal particles by promoting the release of shuttling protein RSL24D1/RLP24 from the pre-ribosomal particles. The sequence is that of Cyclin-dependent kinase 2-interacting protein from Homo sapiens (Human).